A 353-amino-acid polypeptide reads, in one-letter code: MSEPLKPRIDFAEPLKEEPTSAFKAQQTFSEAESRTFAPAAIDERPEDEGVAEAAVDAALRPKRSLWRKMVMGGLALFGASVVGQGVQWTMNAWQTQDWVALGGCAAGALIIGAGVGSVVTEWRRLWRLRQRAHERDEARELLHSHSVGKGRAFCEKLAQQAGIDQSHPALQRWYAAIHETQNDREIVGLYAHLVQLVLDAQARREISRFAAESTLMIAVSSLALVDMAFIAWRNLRLINRIATLYGIELGYYSRLRLFRLVLLNIAFAGASELVREVGMDWMSQDLAARLSTRAAQGIGAGLLTARLGIKAMELCRPLPWIDNDKPRLGDFRRQLIGQLKETLQKSKSSPEK.

The span at 1–19 shows a compositional bias: basic and acidic residues; that stretch reads MSEPLKPRIDFAEPLKEEP. Residues 1–35 are disordered; it reads MSEPLKPRIDFAEPLKEEPTSAFKAQQTFSEAESR. The next 3 membrane-spanning stretches (helical) occupy residues 70-90, 100-120, and 213-233; these read MVMGGLALFGASVVGQGVQWT, VALGGCAAGALIIGAGVGSVV, and ESTLMIAVSSLALVDMAFIAW.

The protein belongs to the UPF0283 family.

It localises to the cell inner membrane. In Salmonella gallinarum (strain 287/91 / NCTC 13346), this protein is UPF0283 membrane protein YcjF.